Here is a 327-residue protein sequence, read N- to C-terminus: UDP-N-acetylenolpyruvoylglucosamine reductase (327 aa).

Residues 42 to 223 (RTGGLAELFY…RAAMDEVALH (182 aa)) enclose the FAD-binding PCMH-type domain. Residue Arg-188 is part of the active site. The active-site Proton donor is Ser-237. Glu-307 is an active-site residue.

This sequence belongs to the MurB family. FAD is required as a cofactor.

The protein localises to the cytoplasm. The enzyme catalyses UDP-N-acetyl-alpha-D-muramate + NADP(+) = UDP-N-acetyl-3-O-(1-carboxyvinyl)-alpha-D-glucosamine + NADPH + H(+). Its pathway is cell wall biogenesis; peptidoglycan biosynthesis. Its function is as follows. Cell wall formation. The sequence is that of UDP-N-acetylenolpyruvoylglucosamine reductase from Bartonella tribocorum (strain CIP 105476 / IBS 506).